The chain runs to 644 residues: Exoribonuclease 2 (644 aa).

The RNB domain occupies 189–516 (REDLTALDFV…NHRLLKAVIK (328 aa)). Residues 561 to 643 (DTRFAAEIVD…ETRSIIARPV (83 aa)) form the S1 motif domain.

It belongs to the RNR ribonuclease family. RNase II subfamily.

It localises to the cytoplasm. The enzyme catalyses Exonucleolytic cleavage in the 3'- to 5'-direction to yield nucleoside 5'-phosphates.. Involved in mRNA degradation. Hydrolyzes single-stranded polyribonucleotides processively in the 3' to 5' direction. The protein is Exoribonuclease 2 of Escherichia coli O17:K52:H18 (strain UMN026 / ExPEC).